The sequence spans 77 residues: Acyl carrier protein (77 aa).

The 76-residue stretch at 1–76 (MSLEDDVKAI…DVIKYIQERQ (76 aa)) folds into the Carrier domain. At serine 36 the chain carries O-(pantetheine 4'-phosphoryl)serine.

It belongs to the acyl carrier protein (ACP) family. 4'-phosphopantetheine is transferred from CoA to a specific serine of apo-ACP by AcpS. This modification is essential for activity because fatty acids are bound in thioester linkage to the sulfhydryl of the prosthetic group.

Its subcellular location is the cytoplasm. Its pathway is lipid metabolism; fatty acid biosynthesis. Functionally, carrier of the growing fatty acid chain in fatty acid biosynthesis. In Chlamydia muridarum (strain MoPn / Nigg), this protein is Acyl carrier protein.